We begin with the raw amino-acid sequence, 165 residues long: 6,7-dimethyl-8-ribityllumazine synthase (165 aa).

5-amino-6-(D-ribitylamino)uracil-binding positions include phenylalanine 24, 62–64 (AFE), and 86–88 (AVI). 91 to 92 (DT) provides a ligand contact to (2S)-2-hydroxy-3-oxobutyl phosphate. The Proton donor role is filled by histidine 94. Phenylalanine 119 contributes to the 5-amino-6-(D-ribitylamino)uracil binding site. Residue arginine 133 participates in (2S)-2-hydroxy-3-oxobutyl phosphate binding.

The protein belongs to the DMRL synthase family.

The catalysed reaction is (2S)-2-hydroxy-3-oxobutyl phosphate + 5-amino-6-(D-ribitylamino)uracil = 6,7-dimethyl-8-(1-D-ribityl)lumazine + phosphate + 2 H2O + H(+). It participates in cofactor biosynthesis; riboflavin biosynthesis; riboflavin from 2-hydroxy-3-oxobutyl phosphate and 5-amino-6-(D-ribitylamino)uracil: step 1/2. In terms of biological role, catalyzes the formation of 6,7-dimethyl-8-ribityllumazine by condensation of 5-amino-6-(D-ribitylamino)uracil with 3,4-dihydroxy-2-butanone 4-phosphate. This is the penultimate step in the biosynthesis of riboflavin. This is 6,7-dimethyl-8-ribityllumazine synthase from Prochlorococcus marinus (strain MIT 9313).